Here is a 141-residue protein sequence, read N- to C-terminus: Nucleoside diphosphate kinase (141 aa).

ATP is bound by residues K11, F59, R87, T93, R104, and N114. The active-site Pros-phosphohistidine intermediate is H117.

It belongs to the NDK family. Homotetramer. Mg(2+) serves as cofactor.

The protein resides in the cytoplasm. The catalysed reaction is a 2'-deoxyribonucleoside 5'-diphosphate + ATP = a 2'-deoxyribonucleoside 5'-triphosphate + ADP. It carries out the reaction a ribonucleoside 5'-diphosphate + ATP = a ribonucleoside 5'-triphosphate + ADP. Its function is as follows. Major role in the synthesis of nucleoside triphosphates other than ATP. The ATP gamma phosphate is transferred to the NDP beta phosphate via a ping-pong mechanism, using a phosphorylated active-site intermediate. This is Nucleoside diphosphate kinase from Xanthomonas axonopodis pv. citri (strain 306).